Consider the following 449-residue polypeptide: L-lysine-epsilon aminotransferase (449 aa).

Residues glycine 128 and alanine 129 each coordinate pyridoxal 5'-phosphate. 2 residues coordinate 2-oxoglutarate: arginine 170 and glutamine 274. An L-lysine-binding site is contributed by arginine 170. Glutamine 274 is a pyridoxal 5'-phosphate binding site. Lysine 300 carries the N6-(pyridoxal phosphate)lysine modification. A 2-oxoglutarate-binding site is contributed by arginine 422.

This sequence belongs to the class-III pyridoxal-phosphate-dependent aminotransferase family. Requires pyridoxal 5'-phosphate as cofactor.

The enzyme catalyses L-lysine + 2-oxoglutarate = (S)-2-amino-6-oxohexanoate + L-glutamate. Catalyzes the transfer of the terminal amino group of L-lysine to alpha-ketoglutarate to yield L-glutamate and 2-aminoadipate 6-semialdehyde ((S)-2-amino-6-oxohexanoate), which is spontaneously converted to the dehydrated form 1-piperideine 6-carboxylate. The chain is L-lysine-epsilon aminotransferase from Mycobacterium bovis (strain ATCC BAA-935 / AF2122/97).